Reading from the N-terminus, the 229-residue chain is Potassium/proton antiporter CemA (229 aa).

Transmembrane regions (helical) follow at residues 6 to 26 (AFIPFLYFTSIVFFPWWISLC), 107 to 127 (IFNFSTNLISFVILSSYSFWG), 152 to 172 (FLILLLTDLCIGFHSPHGWEL), and 190 to 210 (LSGLVSTFPVILDTIFKYWIF).

This sequence belongs to the CemA family.

It is found in the plastid. The protein resides in the chloroplast inner membrane. It carries out the reaction K(+)(in) + H(+)(out) = K(+)(out) + H(+)(in). Contributes to K(+)/H(+) antiport activity by supporting proton efflux to control proton extrusion and homeostasis in chloroplasts in a light-dependent manner to modulate photosynthesis. Prevents excessive induction of non-photochemical quenching (NPQ) under continuous-light conditions. Indirectly promotes efficient inorganic carbon uptake into chloroplasts. In Aethionema cordifolium (Lebanon stonecress), this protein is Potassium/proton antiporter CemA.